A 202-amino-acid polypeptide reads, in one-letter code: Casparian strip membrane protein 1 (202 aa).

Over 1–42 the chain is Cytoplasmic; the sequence is MEKNKSTAIEIAESSKESKGKAPLLAAAVGHDRAAGYKRGVS. Residues 43 to 63 form a helical membrane-spanning segment; it reads IFDLFLRISAATAALAATIVM. The Extracellular portion of the chain corresponds to 64-90; sequence GTTEQTLPFFTQFFQFRAQYDDLPTFT. The chain crosses the membrane as a helical span at residues 91 to 111; the sequence is FFVVGMAIVTGYLILSVPFSI. Over 112–130 the chain is Cytoplasmic; sequence VCIARPVAIGPRFLLIVGD. The chain crosses the membrane as a helical span at residues 131–151; that stretch reads TLKAVLATSAAGSSAAIVYLA. The Extracellular segment spans residues 152–173; that stretch reads HNGNSDANWLDICQQFNDFCQR. Residues 174–194 traverse the membrane as a helical segment; it reads VSGAVVAAFVAVVLLIFLIVL. Over 195-202 the chain is Cytoplasmic; that stretch reads SAMALRKN.

This sequence belongs to the Casparian strip membrane proteins (CASP) family. In terms of assembly, homodimer and heterodimers.

The protein localises to the cell membrane. Regulates membrane-cell wall junctions and localized cell wall deposition. Required for establishment of the Casparian strip membrane domain (CSD) and the subsequent formation of Casparian strips, a cell wall modification of the root endodermis that determines an apoplastic barrier between the intraorganismal apoplasm and the extraorganismal apoplasm and prevents lateral diffusion. This is Casparian strip membrane protein 1 from Striga hermonthica (Purple witchweed).